Reading from the N-terminus, the 241-residue chain is Probable transcriptional regulatory protein str0195 (241 aa).

Belongs to the TACO1 family. YeeN subfamily.

It localises to the cytoplasm. The chain is Probable transcriptional regulatory protein str0195 from Streptococcus thermophilus (strain CNRZ 1066).